Reading from the N-terminus, the 576-residue chain is Putative pentatricopeptide repeat-containing protein At5g47460 (576 aa).

14 PPR repeats span residues 20–53, 54–88, 89–119, 120–154, 155–189, 191–225, 226–252, 253–287, 288–318, 319–353, 354–384, 385–419, 421–452, and 458–488; these read SSNS…GEKP, DASP…GFVS, NTRL…MPDP, DVIS…DVFP, NEFS…GLEK, NVVV…DTVS, WNAI…MPNP, DTVT…NSSS, WNTI…GVRF, DEYS…GLDS, RVVV…MPRK, NLIV…RFLK, DRFT…MINE, and SVEH…FGFG. A type E motif region spans residues 493-570; sequence AWRALLGACS…EVGSSWIDSR (78 aa).

The protein belongs to the PPR family. PCMP-E subfamily.

The protein is Putative pentatricopeptide repeat-containing protein At5g47460 (PCMP-E103) of Arabidopsis thaliana (Mouse-ear cress).